The following is a 603-amino-acid chain: D-3-phosphoglycerate dehydrogenase 1, chloroplastic (603 aa).

The N-terminal 54 residues, 1-54 (MSATAAASSSIAVATNSLRNVTLSSRSPLPSAISVAFPSRGRNTLQRRLVLVSC), are a transit peptide targeting the chloroplast. Residues 210 to 211 (KV), aspartate 230, 289 to 291 (VAR), and aspartate 315 each bind NAD(+). The active site involves arginine 291. The active site involves glutamate 320. Histidine 339 acts as the Proton donor in catalysis. An NAD(+)-binding site is contributed by 339–342 (HLGA). One can recognise an ACT domain in the interval 531–603 (IILCRQVDQP…AVEEFVFLKL (73 aa)).

The protein belongs to the D-isomer specific 2-hydroxyacid dehydrogenase family. As to expression, ubiquitous, but highly expressed in roots. Expressed in vasculature, root and shoot meristems, distal part of cotyledons and leaves, anther, stigma and pollen grains. Detected at the tip of the cotyledons in late embryos.

The protein localises to the plastid. It localises to the chloroplast. It catalyses the reaction (2R)-3-phosphoglycerate + NAD(+) = 3-phosphooxypyruvate + NADH + H(+). It functions in the pathway amino-acid biosynthesis; L-serine biosynthesis; L-serine from 3-phospho-D-glycerate: step 1/3. Partially inhibited by 5 mM serine. In terms of biological role, involved in the plastidial phosphorylated pathway of serine biosynthesis (PPSB). Required for mature pollen development. The chain is D-3-phosphoglycerate dehydrogenase 1, chloroplastic (PGDH1) from Arabidopsis thaliana (Mouse-ear cress).